Consider the following 372-residue polypeptide: L-selectin (372 aa).

The N-terminal stretch at 1–28 (MVFPWRCEGTYWGSRNILKLWVWTLLCC) is a signal peptide. A propeptide spanning residues 29-38 (DFLIHHGTHC) is cleaved from the precursor. At 39-332 (WTYHYSEKPM…FSKIKEGDYN (294 aa)) the chain is on the extracellular side. Positions 55–155 (KFCKQNYTDL…ACHKRKAALC (101 aa)) constitute a C-type lectin domain. 10 disulfides stabilise this stretch: Cys57–Cys155, Cys128–Cys147, Cys128–Cys160, Cys160–Cys171, Cys165–Cys180, Cys182–Cys191, Cys197–Cys241, Cys227–Cys254, Cys259–Cys303, and Cys289–Cys316. 2 N-linked (GlcNAc...) asparagine glycosylation sites follow: Asn60 and Asn104. Residues Glu118, Asn120, Glu126, Asn143, and Asp144 each coordinate Ca(2+). Residues 156–192 (YTASCQPGSCNGRGECVETINNHTCICDAGYYGPQCQ) enclose the EGF-like domain. A glycan (N-linked (GlcNAc...) asparagine) is linked at Asn177. Sushi domains follow at residues 195–256 (VQCE…ICQV) and 257–318 (VQCE…ICQE). N-linked (GlcNAc...) asparagine glycosylation is found at Asn216, Asn226, Asn246, Asn278, Asn288, Asn308, and Asn320. Residues 333–355 (PLFIPVAVMVTAFSGLAFLIWLA) form a helical membrane-spanning segment. Topologically, residues 356-372 (RRLKKGKKSQERMDDPY) are cytoplasmic.

It belongs to the selectin/LECAM family. As to quaternary structure, interaction with SELPLG/PSGL1 and PODXL2 is required for promoting recruitment and rolling of leukocytes. This interaction is dependent on the sialyl Lewis X glycan modification of SELPLG and PODXL2, and tyrosine sulfation modifications of SELPLG. Sulfation on 'Tyr-51' of SELPLG is important for L-selectin binding. In terms of processing, N-glycosylated. As to expression, predominantly expressed in lymphoid tissue.

Its subcellular location is the cell membrane. Functionally, calcium-dependent lectin that mediates cell adhesion by binding to glycoproteins on neighboring cells. Mediates the adherence of lymphocytes to endothelial cells of high endothelial venules in peripheral lymph nodes. Promotes initial tethering and rolling of leukocytes in endothelia. This is L-selectin (Sell) from Mus musculus (Mouse).